The sequence spans 435 residues: GTPase Obg (435 aa).

The Obg domain maps to 6–164; that stretch reads ADFVDRVKIF…RWLELELKIL (159 aa). The OBG-type G domain maps to 165–335; the sequence is ADVGLVGYPN…LVSKLASIVR (171 aa). Residues 171–178, 196–200, 217–220, 287–290, and 316–318 each bind GTP; these read GYPNVGKS, FTTLI, DIPG, NKID, and SAL. Mg(2+)-binding residues include Ser178 and Thr198. One can recognise an OCT domain in the interval 357 to 435; that stretch reads RRLPEKFHLE…IGDFEFEYRE (79 aa).

The protein belongs to the TRAFAC class OBG-HflX-like GTPase superfamily. OBG GTPase family. Monomer. Requires Mg(2+) as cofactor.

Its subcellular location is the cytoplasm. In terms of biological role, an essential GTPase which binds GTP, GDP and possibly (p)ppGpp with moderate affinity, with high nucleotide exchange rates and a fairly low GTP hydrolysis rate. Plays a role in control of the cell cycle, stress response, ribosome biogenesis and in those bacteria that undergo differentiation, in morphogenesis control. This Thermotoga sp. (strain RQ2) protein is GTPase Obg.